Here is a 129-residue protein sequence, read N- to C-terminus: Lysozyme C (129 aa).

In terms of domain architecture, C-type lysozyme spans lysine 1–leucine 129. 4 cysteine pairs are disulfide-bonded: cysteine 6–cysteine 127, cysteine 30–cysteine 115, cysteine 64–cysteine 80, and cysteine 76–cysteine 94. Catalysis depends on residues glutamate 35 and aspartate 52.

It belongs to the glycosyl hydrolase 22 family. In terms of assembly, monomer.

It localises to the secreted. The catalysed reaction is Hydrolysis of (1-&gt;4)-beta-linkages between N-acetylmuramic acid and N-acetyl-D-glucosamine residues in a peptidoglycan and between N-acetyl-D-glucosamine residues in chitodextrins.. Functionally, lysozymes have primarily a bacteriolytic function; those in tissues and body fluids are associated with the monocyte-macrophage system and enhance the activity of immunoagents. The chain is Lysozyme C (LYZ) from Tragopan satyra (Satyr tragopan).